The chain runs to 271 residues: Calcium-binding protein 4 (271 aa).

Residues 1-105 (MATEHNVQLV…RSDPQQDAAQ (105 aa)) form a disordered region. Ser-37 carries the post-translational modification Phosphoserine; by PKC/PRKCZ. Residues 45–67 (GSQKASSGDQSSSQGSEASGSSK) are compositionally biased toward low complexity. Basic residues predominate over residues 87–96 (ASHRHSHRHR). EF-hand domains are found at residues 125–160 (EELE…LGYM), 179–196 (GFVD…KLRE), 202–237 (LGVR…LLGE), and 239–271 (LEGT…LSTG). 5 residues coordinate Ca(2+): Asp-138, Asp-140, Asp-142, Tyr-144, and Glu-149. Positions 215, 217, 219, 221, 226, 252, 254, 256, 258, and 263 each coordinate Ca(2+).

In terms of assembly, interacts with CACNA1F and CACNA1D (via IQ domain) in a calcium independent manner. Interacts (via N-terminus) with UNC119. Phosphorylated. Phosphorylation levels change with the light conditions and regulate the activity, but has no effect on calcium binding. In terms of tissue distribution, expressed in retina and in the inner hair cells (IHC) of the cochlea.

The protein localises to the cytoplasm. It is found in the presynapse. In terms of biological role, involved in normal synaptic function through regulation of Ca(2+) influx and neurotransmitter release in photoreceptor synaptic terminals and in auditory transmission. Modulator of CACNA1D and CACNA1F, suppressing the calcium-dependent inactivation and shifting the activation range to more hyperpolarized voltages. The protein is Calcium-binding protein 4 (Cabp4) of Mus musculus (Mouse).